Reading from the N-terminus, the 513-residue chain is Probable cytosol aminopeptidase (513 aa).

Mn(2+)-binding residues include K277 and D282. Residue K289 is part of the active site. Mn(2+) is bound by residues D300, D359, and E361. The active site involves R363.

Belongs to the peptidase M17 family. It depends on Mn(2+) as a cofactor.

Its subcellular location is the cytoplasm. It carries out the reaction Release of an N-terminal amino acid, Xaa-|-Yaa-, in which Xaa is preferably Leu, but may be other amino acids including Pro although not Arg or Lys, and Yaa may be Pro. Amino acid amides and methyl esters are also readily hydrolyzed, but rates on arylamides are exceedingly low.. It catalyses the reaction Release of an N-terminal amino acid, preferentially leucine, but not glutamic or aspartic acids.. Its function is as follows. Presumably involved in the processing and regular turnover of intracellular proteins. Catalyzes the removal of unsubstituted N-terminal amino acids from various peptides. This chain is Probable cytosol aminopeptidase, found in Mycobacterium sp. (strain KMS).